Reading from the N-terminus, the 575-residue chain is Serine/threonine-protein kinase YPK1 (575 aa).

The segment at 1 to 53 is disordered; it reads MMSWKFGKKFKEGGFLSGKHHSSNNNSPSDTSRSTTPTPGNPHPEDAVKPPVP. Low complexity predominate over residues 23 to 38; that stretch reads SNNNSPSDTSRSTTPT. Positions 245-500 constitute a Protein kinase domain; that stretch reads FELLKVIGKG…AQDIKNHPFF (256 aa). Residues 251–259 and Lys-274 contribute to the ATP site; that span reads IGKGSFGKV. Asp-368 functions as the Proton acceptor in the catalytic mechanism. The AGC-kinase C-terminal domain maps to 502-573; sequence KHINFTKLWN…SVSPLGESVG (72 aa). Phosphoserine occurs at positions 543 and 562.

Belongs to the protein kinase superfamily. AGC Ser/Thr protein kinase family. RAC subfamily.

It catalyses the reaction L-seryl-[protein] + ATP = O-phospho-L-seryl-[protein] + ADP + H(+). The catalysed reaction is L-threonyl-[protein] + ATP = O-phospho-L-threonyl-[protein] + ADP + H(+). In terms of biological role, probable serine/threonine-protein kinase which may act in the sphingolipid-mediated signaling pathway. May act downstream of TORC2 (TOR complex 2) and PDK1 to regulate sphingolipid metabolism. This is Serine/threonine-protein kinase YPK1 from Cryptococcus neoformans var. grubii serotype A (strain H99 / ATCC 208821 / CBS 10515 / FGSC 9487) (Filobasidiella neoformans var. grubii).